A 595-amino-acid polypeptide reads, in one-letter code: Fructan 1-exohydrolase (595 aa).

The signal sequence occupies residues 1 to 20 (MAQAWAFLLPLLVLGSYVTS). Residue Asp-74 is part of the active site. Residues Asn-167, Asn-235, and Asn-247 are each glycosylated (N-linked (GlcNAc...) asparagine). A disulfide bridge connects residues Cys-445 and Cys-491. Asn-566 carries N-linked (GlcNAc...) asparagine glycosylation.

This sequence belongs to the glycosyl hydrolase 32 family.

The enzyme catalyses Hydrolysis of terminal, non-reducing (2-&gt;1)-linked beta-D-fructofuranose residues in fructans.. Its activity is regulated as follows. Inhibited by sucrose. Hydrolyzes inulin-type beta-(2,1)-fructans. May play a role as a beta-(2,1)-trimmer during graminan biosynthesis. The protein is Fructan 1-exohydrolase of Aegilops speltoides (Goatgrass).